The sequence spans 119 residues: MVKLGFSRELRLLTPSHFKCVFQKPLRVSTPEITILARKNNLEHSRLGLTVAKKHLKRAHDRNRVKRISRESFRLLQGQLANYDFVIITKKGIGNLDNQQLFQTLDKLWKRHIRLVQKS.

The protein belongs to the RnpA family. In terms of assembly, consists of a catalytic RNA component (M1 or rnpB) and a protein subunit.

It catalyses the reaction Endonucleolytic cleavage of RNA, removing 5'-extranucleotides from tRNA precursor.. Functionally, RNaseP catalyzes the removal of the 5'-leader sequence from pre-tRNA to produce the mature 5'-terminus. It can also cleave other RNA substrates such as 4.5S RNA. The protein component plays an auxiliary but essential role in vivo by binding to the 5'-leader sequence and broadening the substrate specificity of the ribozyme. This Histophilus somni (strain 129Pt) (Haemophilus somnus) protein is Ribonuclease P protein component.